Here is a 114-residue protein sequence, read N- to C-terminus: uncharacterized protein (114 aa).

The protein localises to the mitochondrion. This is an uncharacterized protein from Arabidopsis thaliana (Mouse-ear cress).